A 788-amino-acid polypeptide reads, in one-letter code: Patatin-like phospholipase domain-containing protein DEHA2B04136g (788 aa).

Residues 136–156 (WPILIFISCWISLLCFMYIIV) traverse the membrane as a helical segment. Residues 311 to 503 (LCLSGGACFT…RTDIPIDALN (193 aa)) form the PNPLA domain. The GXSXG signature appears at 342-346 (GTSGG). S344 serves as the catalytic Nucleophile. Residue D490 is the Proton acceptor of the active site. The segment covering 662 to 672 (ANFNTLTSSDS) has biased composition (polar residues). A disordered region spans residues 662–771 (ANFNTLTSSD…DTGSRFLKSF (110 aa)). Acidic residues-rich tracts occupy residues 690-705 (MFDDDEYDSDSSDDEV) and 723-749 (EDGDDDEDAYEYYDDDDYGLSTEDEAN).

It belongs to the PLPL family.

The protein localises to the membrane. Probable lipid hydrolase. The polypeptide is Patatin-like phospholipase domain-containing protein DEHA2B04136g (Debaryomyces hansenii (strain ATCC 36239 / CBS 767 / BCRC 21394 / JCM 1990 / NBRC 0083 / IGC 2968) (Yeast)).